Consider the following 172-residue polypeptide: Peptidyl-prolyl cis-trans isomerase (172 aa).

One can recognise a PPIase cyclophilin-type domain in the interval 7–170 (FFDMAIAGNP…RPVTIADCGQ (164 aa)).

Belongs to the cyclophilin-type PPIase family. Expressed in meristematic tissues, with higher levels in nodules.

It is found in the cytoplasm. The enzyme catalyses [protein]-peptidylproline (omega=180) = [protein]-peptidylproline (omega=0). With respect to regulation, binds cyclosporin A (CsA). CsA mediates some of its effects via an inhibitory action on PPIase. PPIases accelerate the folding of proteins. It catalyzes the cis-trans isomerization of proline imidic peptide bonds in oligopeptides. The protein is Peptidyl-prolyl cis-trans isomerase of Lupinus luteus (European yellow lupine).